The chain runs to 986 residues: Ankyrin repeat, PH and SEC7 domain containing protein secG (986 aa).

The span at 1-28 (MGSTSNSTKNTGSTTTTTTTAAPATTAK) shows a compositional bias: low complexity. The tract at residues 1-43 (MGSTSNSTKNTGSTTTTTTTAAPATTAKHSNSAPTRPSVHYYS) is disordered. Residues 29–43 (HSNSAPTRPSVHYYS) show a composition bias toward polar residues. 15 ANK repeats span residues 34–63 (PTRP…TSPD), 68–97 (EKRT…NANI), 101–131 (AGNT…DVNT), 135–164 (KNGT…DPRA), 168–197 (NGET…KVNA), 201–230 (DCIT…KVDP), 234–263 (HGIS…NINC), 267–296 (EGVT…KINM), 300–329 (MGET…TMID), 334–363 (RQST…QINI), 367–396 (EGAT…PICI), 400–429 (QGAT…ELEV), 433–462 (QGGT…NVNA), 466–495 (HSST…RIDA), and 499–528 (AGKT…DLDQ). Residues 580–770 (QLAAEKQKLL…ENLYDKIVTN (191 aa)) enclose the SEC7 domain. The PH domain occupies 784–895 (HVEKKGWLTK…WVQSIKSNIH (112 aa)). Residues 911 to 986 (IRGRGKVSTK…PVQQQTSALS (76 aa)) are disordered. Residues 920-929 (KPIQNRKQTI) show a composition bias toward polar residues. Composition is skewed to low complexity over residues 936 to 953 (TTTT…SVGS) and 963 to 986 (SSGS…SALS).

The polypeptide is Ankyrin repeat, PH and SEC7 domain containing protein secG (secG) (Dictyostelium discoideum (Social amoeba)).